A 383-amino-acid chain; its full sequence is MSPNPSNSLDAFAGEKLAGLEASALRRRLAVTARGPEAAAERGGRSLVSFSCNDYLGLAHDPRVIAAATEALARYGAGAGASRLVTGNSPPLAALEERLARHKGKEAALVFGSGYLANLGIAPALVGAGDLILIDELGHSCLFAGAAMSRAQTVRFAHNDVAQLRTLLAEHRGTARRALILTERVFSMDGDRAPLPEILALAGEYDAWTLVDDAHGLGVVEPGQRAPLEMGTLSKTLGSYGGYLCASQPVIDLLTSRARSLVYTTGLPPASAAAALTALDIVETEPERAARPLALARRFTARLGLPEAMSPIVPVLIGAAEAALALSTALEARGFLVVAIRPPTVAPGTARLRVAFSAAHDEGQVDALAEALIELAPESVRAG.

Positions 27 and 34 each coordinate substrate. Gly114–Tyr115 is a pyridoxal 5'-phosphate binding site. His139 is a substrate binding site. Pyridoxal 5'-phosphate-binding positions include Ser187, Asp212–His215, and Thr232–Lys235. Lys235 is modified (N6-(pyridoxal phosphate)lysine). A substrate-binding site is contributed by Thr344.

This sequence belongs to the class-II pyridoxal-phosphate-dependent aminotransferase family. BioF subfamily. Homodimer. It depends on pyridoxal 5'-phosphate as a cofactor.

It catalyses the reaction 6-carboxyhexanoyl-[ACP] + L-alanine + H(+) = (8S)-8-amino-7-oxononanoate + holo-[ACP] + CO2. Its pathway is cofactor biosynthesis; biotin biosynthesis. Functionally, catalyzes the decarboxylative condensation of pimeloyl-[acyl-carrier protein] and L-alanine to produce 8-amino-7-oxononanoate (AON), [acyl-carrier protein], and carbon dioxide. The chain is 8-amino-7-oxononanoate synthase from Methylorubrum extorquens (strain PA1) (Methylobacterium extorquens).